The sequence spans 609 residues: Probable G-protein coupled receptor 153 (609 aa).

Residues 1 to 11 (MSDERRLPGSA) are Extracellular-facing. Residues 12–32 (VGWLVCGGLSLLANAWGILSV) traverse the membrane as a helical segment. Over 33 to 41 (GAKQKKWKP) the chain is Cytoplasmic. The chain crosses the membrane as a helical span at residues 42-62 (LEFLLCTLAATHMLNVAVPIA). Topologically, residues 63 to 84 (TYSVVQLRRQRPDFEWNEGLCK) are extracellular. The helical transmembrane segment at 85-105 (VFVSTFYTLTLATCFSVTSLS) threads the bilayer. The Cytoplasmic portion of the chain corresponds to 106 to 126 (YHRMWMVCWPVNYRLSNAKKQ). The chain crosses the membrane as a helical span at residues 127 to 147 (AVHTVMGIWMVSFILSALPAV). Over 148–175 (GWHDTSERFYTHGCRFIVAEIGLGFGVC) the chain is Extracellular. Residues 176–196 (FLLLVGGSVAMGVICTAIALF) traverse the membrane as a helical segment. Over 197–243 (QTLAVQVGRQADRRAFTVPTIVVEDAQGKRRSSIDGSEPAKTSLQTT) the chain is Cytoplasmic. A helical membrane pass occupies residues 244–264 (GLVTTIVFIYDCLMGFPVLVV). Residues 265 to 276 (SFSSLRADASAP) are Extracellular-facing. Residues 277 to 297 (WMALCVLWCSVAQALLLPVFL) traverse the membrane as a helical segment. At 298 to 609 (WACDRYRADL…LHSDSLGSAS (312 aa)) the chain is on the cytoplasmic side. 2 disordered regions span residues 446–496 (DAPP…SASA) and 514–609 (ALRR…GSAS). 2 stretches are compositionally biased toward low complexity: residues 458–479 (ESLL…RDSP) and 527–536 (AAPDGADPGE). A compositionally biased stretch (gly residues) spans 571–583 (EPGGLRAAGGGGS). A compositionally biased stretch (low complexity) spans 584–596 (TSSFLSSPSESSG).

Belongs to the G-protein coupled receptor 1 family.

The protein resides in the cell membrane. Orphan receptor. The chain is Probable G-protein coupled receptor 153 (GPR153) from Homo sapiens (Human).